The chain runs to 405 residues: 3-hydroxy-3-methylglutaryl-coenzyme A reductase (405 aa).

Active-site charge relay system residues include Glu100 and Asp310. His400 (proton donor) is an active-site residue.

The protein belongs to the HMG-CoA reductase family.

The catalysed reaction is (R)-mevalonate + 2 NADP(+) + CoA = (3S)-3-hydroxy-3-methylglutaryl-CoA + 2 NADPH + 2 H(+). It participates in metabolic intermediate biosynthesis; (R)-mevalonate biosynthesis; (R)-mevalonate from acetyl-CoA: step 3/3. In terms of biological role, converts HMG-CoA to mevalonate. The polypeptide is 3-hydroxy-3-methylglutaryl-coenzyme A reductase (hmgA) (Methanocaldococcus jannaschii (strain ATCC 43067 / DSM 2661 / JAL-1 / JCM 10045 / NBRC 100440) (Methanococcus jannaschii)).